A 568-amino-acid chain; its full sequence is Small ribosomal subunit protein bS1 (568 aa).

S1 motif domains lie at 39 to 100 (KTVV…LSRE), 118 to 184 (GEFV…VSRR), 205 to 273 (GMVL…LGIK), 290 to 360 (GKQM…LSIK), 377 to 447 (GTII…LGIK), and 464 to 533 (GTIV…LSVK).

Belongs to the bacterial ribosomal protein bS1 family.

Its function is as follows. Binds mRNA; thus facilitating recognition of the initiation point. It is needed to translate mRNA with a short Shine-Dalgarno (SD) purine-rich sequence. In Rickettsia conorii (strain ATCC VR-613 / Malish 7), this protein is Small ribosomal subunit protein bS1 (rpsA).